Here is a 1143-residue protein sequence, read N- to C-terminus: Condensin-2 complex subunit G2 (1143 aa).

Ser-30 bears the Phosphoserine mark. The HEAT repeat unit spans residues 460 to 498 (LLPALRYSLHDNSEKVRVAFVDMLLKIKAVRAAKFWKIC). A phosphothreonine mark is found at Thr-805 and Thr-1119.

Component of the condensin-2 complex, which contains the SMC2 and SMC4 heterodimer, and 3 non SMC subunits that probably regulate the complex: NCAPH2, NCAPD3 and NCAPG2.

It localises to the nucleus. In terms of biological role, regulatory subunit of the condensin-2 complex, a complex which establishes mitotic chromosome architecture and is involved in physical rigidity of the chromatid axis. This chain is Condensin-2 complex subunit G2 (NCAPG2), found in Homo sapiens (Human).